The primary structure comprises 565 residues: MDYKKLVAERIKEHVDLELENIEKLIEIPPKPEMGDFAFPCFQLAKVMRKAPNMIAAELAEKINKEGFERVECLGPYLNFFVDKVAFSKNIISKVLEEGDKYGSSKIGEGKNVVVEYSSPNIAKPFHVGHLFTTAIGHSLYRMLNFEGYNPIRINHLGDWGTQFGKLISAYKRWGNEEALEEAPINELLRIYVKFHDEAENNPELEDEGRMYFKKLEDGDQEAVALWERFKDLSLKEFNKIYDMLGVDFDSWAGESFYNDKMDKVVEELEKANILTESNGAKVVMLDEYNMPPCIVVKSDGASIYATRDLAAASYRHKTYNFDKCIYVVGKDQILHFNQVFKTLELAGNEWAKNCVHIPFGLVKFADRKLSTRKGNVVLLEDLLNEAIDKTRETIEEKNPQLENKEEVAKKIGIGAILFTYLKNSRERDIVFDWKEMLSFDGETGPYVQYSYARAKSILRKAEEQKITAEPDFTKLTSKEEFELAKTLEGLQKAVILGIDKLEPSVVTRYSIEVAKAFNKFYNNHTVLNVEDEGLKAARLELIKATAQVIKNALFLIGIDVVEKM.

A 'HIGH' region motif is present at residues proline 120–histidine 130.

The protein belongs to the class-I aminoacyl-tRNA synthetase family. Monomer.

The protein localises to the cytoplasm. It carries out the reaction tRNA(Arg) + L-arginine + ATP = L-arginyl-tRNA(Arg) + AMP + diphosphate. In Clostridium perfringens (strain 13 / Type A), this protein is Arginine--tRNA ligase.